The primary structure comprises 699 residues: Elongation factor G (699 aa).

A tr-type G domain is found at 10–292 (DRTRNIGIMA…AVIDYLPSPT (283 aa)). Residues 19 to 26 (AHIDAGKT), 90 to 94 (DTPGH), and 144 to 147 (NKMD) contribute to the GTP site.

This sequence belongs to the TRAFAC class translation factor GTPase superfamily. Classic translation factor GTPase family. EF-G/EF-2 subfamily.

It localises to the cytoplasm. Its function is as follows. Catalyzes the GTP-dependent ribosomal translocation step during translation elongation. During this step, the ribosome changes from the pre-translocational (PRE) to the post-translocational (POST) state as the newly formed A-site-bound peptidyl-tRNA and P-site-bound deacylated tRNA move to the P and E sites, respectively. Catalyzes the coordinated movement of the two tRNA molecules, the mRNA and conformational changes in the ribosome. In Coxiella burnetii (strain Dugway 5J108-111), this protein is Elongation factor G.